A 491-amino-acid chain; its full sequence is (S)-canadine synthase (491 aa).

A helical transmembrane segment spans residues 6-26; it reads LLVCATVAIVFATTTIIRILF. Cysteine 434 contributes to the heme binding site.

It belongs to the cytochrome P450 family. It depends on heme as a cofactor. In terms of tissue distribution, expressed at low levels in roots.

The protein localises to the endoplasmic reticulum membrane. Its subcellular location is the microsome membrane. It catalyses the reaction (S)-tetrahydrocolumbamine + reduced [NADPH--hemoprotein reductase] + O2 = (S)-canadine + oxidized [NADPH--hemoprotein reductase] + 2 H2O + H(+). Functionally, involved in the last but one step of the biosynthesis of berberine, an antimicrobial benzylisoquinoline alkaloid. Converts (S)-tetrahydrocolumbamine (THC) to (S)-tetrahydroberberine (THB) also called (S)-canadine. The sequence is that of (S)-canadine synthase (CYP719A1) from Coptis japonica (Japanese goldthread).